We begin with the raw amino-acid sequence, 98 residues long: Putative defensin-like protein 233 (98 aa).

The N-terminal stretch at 1–28 (MGMWCTTLFMVSCVSICLILSHVQEVEA) is a signal peptide. Intrachain disulfides connect Cys35–Cys96, Cys45–Cys70, Cys53–Cys86, and Cys68–Cys88.

This sequence belongs to the DEFL family. Expressed at least in stem, root, rosette leaves and flower buds.

It localises to the secreted. This chain is Putative defensin-like protein 233 (SCRL22), found in Arabidopsis thaliana (Mouse-ear cress).